Reading from the N-terminus, the 222-residue chain is GTP cyclohydrolase 1 (222 aa).

Zn(2+) contacts are provided by cysteine 111, histidine 114, and cysteine 182.

Belongs to the GTP cyclohydrolase I family. As to quaternary structure, toroid-shaped homodecamer, composed of two pentamers of five dimers.

The enzyme catalyses GTP + H2O = 7,8-dihydroneopterin 3'-triphosphate + formate + H(+). The protein operates within cofactor biosynthesis; 7,8-dihydroneopterin triphosphate biosynthesis; 7,8-dihydroneopterin triphosphate from GTP: step 1/1. Its activity is regulated as follows. Allosteric enzyme. Activity is modulated by K(+), divalent cations, UTP, and tetrahydrobiopterin. Tetrahydrobiopterin is an inhibitor of this enzyme. This chain is GTP cyclohydrolase 1, found in Salmonella typhi.